The primary structure comprises 291 residues: Bifunctional protein FolD (291 aa).

NADP(+) contacts are provided by residues 168-170 (GRG), Thr-195, and Val-236.

It belongs to the tetrahydrofolate dehydrogenase/cyclohydrolase family. In terms of assembly, homodimer.

It carries out the reaction (6R)-5,10-methylene-5,6,7,8-tetrahydrofolate + NADP(+) = (6R)-5,10-methenyltetrahydrofolate + NADPH. The catalysed reaction is (6R)-5,10-methenyltetrahydrofolate + H2O = (6R)-10-formyltetrahydrofolate + H(+). It functions in the pathway one-carbon metabolism; tetrahydrofolate interconversion. Functionally, catalyzes the oxidation of 5,10-methylenetetrahydrofolate to 5,10-methenyltetrahydrofolate and then the hydrolysis of 5,10-methenyltetrahydrofolate to 10-formyltetrahydrofolate. The sequence is that of Bifunctional protein FolD from Bifidobacterium adolescentis (strain ATCC 15703 / DSM 20083 / NCTC 11814 / E194a).